Reading from the N-terminus, the 338-residue chain is TPR repeat-containing protein MJ0941 (338 aa).

8 TPR repeats span residues 27–62 (LEAV…EPDF), 63–96 (YLAL…ESKN), 97–130 (PITW…ENRF), 131–164 (LSAF…TPNF), 165–198 (VPMW…KPHD), 199–232 (KNAL…LNVK), 268–301 (VALW…QPHY), and 302–335 (IKAL…IHKD).

The sequence is that of TPR repeat-containing protein MJ0941 from Methanocaldococcus jannaschii (strain ATCC 43067 / DSM 2661 / JAL-1 / JCM 10045 / NBRC 100440) (Methanococcus jannaschii).